The primary structure comprises 265 residues: Bradykinin-potentiating and C-type natriuretic peptides (265 aa).

Residues 1-23 (MVLSRLAASGLLLLALLALSVDG) form the signal peptide. The propeptide occupies 24-30 (KPVQQWA). Pyrrolidone carboxylic acid is present on Q31. Positions 44-50 (LKVQQWA) are excised as a propeptide. Q51 is subject to Pyrrolidone carboxylic acid. Residues 64-70 (LTVQQWA) constitute a propeptide that is removed on maturation. Residue Q71 is modified to Pyrrolidone carboxylic acid. A propeptide spanning residues 81–87 (LTVQQWA) is cleaved from the precursor. At Q88 the chain carries Pyrrolidone carboxylic acid. Residues 100-106 (LEVQQWA) constitute a propeptide that is removed on maturation. At Q107 the chain carries Pyrrolidone carboxylic acid. A propeptide spanning residues 118–120 (APL) is cleaved from the precursor. A Pyrrolidone carboxylic acid modification is found at Q121. A propeptide is located at residue V126. Position 127 is a pyrrolidone carboxylic acid (Q127). A propeptide spanning residues 132-241 (LLQPHESPAS…GGARRLKGLA (110 aa)) is cleaved from the precursor. Residues 153–211 (GPEAASGVPSAGAEVGRSGSKAPAAPHRLSKSKGAAATSAASRPMRDLRPDGKQARQNW) form a disordered region. Residues 184 to 194 (SKGAAATSAAS) show a composition bias toward low complexity. The segment covering 196–206 (PMRDLRPDGKQ) has biased composition (basic and acidic residues). A disulfide bridge links C249 with C265.

This sequence in the N-terminal section; belongs to the bradykinin-potentiating peptide family. In the C-terminal section; belongs to the natriuretic peptide family. As to expression, expressed by the venom gland.

It is found in the secreted. Its subcellular location is the cytoplasm. It localises to the cytosol. Modestly inhibits ACE (with highest affinity for the N-site) and reveals strong bradykinin-potentiating activity. Induces nitric oxide (NO) production depended on muscarinic acetylcholine receptor M1 subtype (CHRM1) and bradykinin B2 receptor (BDKRB2) activation. Both these receptors contribute to the vasodilation induced by this peptide that may have an indirect action on BDKRB2 and a direct agonistic action on CHRM1. Its function is as follows. Peptide with several activities. It inhibits the activity of the angiotensin-converting enzyme (ACE) by a preferential interaction with its C-domain. It evokes transient hypotension (-14 mmHg) similar to that evoked by 0.5 ug of bradykinin, when injected alone into rats. It has a high bradykinin-potentiating effect (120%), when 60 nmol of BPP-10c are coinjected with 0.5 ug of bradykinin into rats. Does not affect angiotensin-1 pressor effects. Shows potent and long-lasting antihypertensive activity as well as a reduction of the heart rate. It also binds and dose-dependently promotes the activation of cytosolic argininosuccinate synthase (ASS1), an enzyme that catalyzes the conversion of citrulline, L-aspartate and ATP to argininosuccinate, AMP and pyrophosphate. It also enhances ASS1-dependent arginine production in HEK 293 cells, as well as in spontaneous hypertensive rat (SHR) and Wistar rat plasma. In addition, it induces the production of nitric-oxide (NO) by HUVEC cells via the endothelial nitric-oxide synthase (NOS3), which use arginine as a substrate and produce NO. It has been shown to be internalized by ASS1-expressing endothelial (HUVEC) and kidney (HEK 293) cells, and is detected homogenously distributed within the cell cytoplasm for up to 2 hours. Functionally, has a vasorelaxant activity in rat aortic strips and a diuretic potency in anesthetized rats. May act by activating natriuretic receptors (NPR1 and/or NPR2). This chain is Bradykinin-potentiating and C-type natriuretic peptides, found in Bothrops insularis (Golden lancehead).